We begin with the raw amino-acid sequence, 448 residues long: T-box transcription factor T homolog 1 (448 aa).

The T-box DNA-binding region spans 54–224 (LWDKFNALTN…YNPFAKAFLD (171 aa)). 2 disordered regions span residues 290-312 (APYP…TAAS) and 401-448 (TTAS…PPSL). Residues 417–442 (STDSGYGHSTTPPAPQTRITSNNWSP) are compositionally biased toward polar residues.

It localises to the nucleus. Its function is as follows. Involved in the transcriptional regulation of genes required for mesoderm formation and differentiation. The protein is T-box transcription factor T homolog 1 of Branchiostoma floridae (Florida lancelet).